We begin with the raw amino-acid sequence, 92 residues long: UPF0473 protein BC_4380 (92 aa).

This sequence belongs to the UPF0473 family.

This Bacillus cereus (strain ATCC 14579 / DSM 31 / CCUG 7414 / JCM 2152 / NBRC 15305 / NCIMB 9373 / NCTC 2599 / NRRL B-3711) protein is UPF0473 protein BC_4380.